The chain runs to 508 residues: Light-independent protochlorophyllide reductase subunit B (508 aa).

D36 is a binding site for [4Fe-4S] cluster. D294 serves as the catalytic Proton donor. A substrate-binding site is contributed by 429 to 430; the sequence is GM.

This sequence belongs to the ChlB/BchB/BchZ family. In terms of assembly, protochlorophyllide reductase is composed of three subunits; ChlL, ChlN and ChlB. Forms a heterotetramer of two ChlB and two ChlN subunits. It depends on [4Fe-4S] cluster as a cofactor.

It carries out the reaction chlorophyllide a + oxidized 2[4Fe-4S]-[ferredoxin] + 2 ADP + 2 phosphate = protochlorophyllide a + reduced 2[4Fe-4S]-[ferredoxin] + 2 ATP + 2 H2O. The protein operates within porphyrin-containing compound metabolism; chlorophyll biosynthesis (light-independent). In terms of biological role, component of the dark-operative protochlorophyllide reductase (DPOR) that uses Mg-ATP and reduced ferredoxin to reduce ring D of protochlorophyllide (Pchlide) to form chlorophyllide a (Chlide). This reaction is light-independent. The NB-protein (ChlN-ChlB) is the catalytic component of the complex. The polypeptide is Light-independent protochlorophyllide reductase subunit B (Synechococcus elongatus (strain ATCC 33912 / PCC 7942 / FACHB-805) (Anacystis nidulans R2)).